The sequence spans 358 residues: Ion-translocating oxidoreductase complex subunit D (358 aa).

7 helical membrane-spanning segments follow: residues 16–36, 38–58, 68–90, 128–148, 206–226, 236–256, and 286–306; these read VSRTMLTVVAALTPATLFGLW, FGWPAIFLFLTTVVSAWVFEV, IRPFATDGSAILSGWLVAMTLPP, AMLVVALPVQMTTWIAPVGLL, FVPGSLGETSTVLLALGGLLL, IPLAVLGTLVTLSAICSFLAP, and PVTTAGKWVYGIGIGTLVFVI.

It belongs to the NqrB/RnfD family. As to quaternary structure, the complex is composed of six subunits: RnfA, RnfB, RnfC, RnfD, RnfE and RnfG. FMN is required as a cofactor.

The protein resides in the cellular chromatophore membrane. Its function is as follows. Part of a membrane-bound complex that couples electron transfer with translocation of ions across the membrane. Required for nitrogen fixation. Involved in electron transfer to nitrogenase. In Rhodobacter capsulatus (Rhodopseudomonas capsulata), this protein is Ion-translocating oxidoreductase complex subunit D.